A 60-amino-acid chain; its full sequence is Large ribosomal subunit protein bL32 (60 aa).

Basic residues predominate over residues 1–23; that stretch reads MAKHPVPKKKTSKARRDARRSHH. A disordered region spans residues 1 to 28; it reads MAKHPVPKKKTSKARRDARRSHHALTPP.

This sequence belongs to the bacterial ribosomal protein bL32 family. In terms of assembly, part of the 50S ribosomal subunit.

Found on the solvent side of the large subunit. This is Large ribosomal subunit protein bL32 (rpmF) from Thermus thermophilus (strain ATCC BAA-163 / DSM 7039 / HB27).